Consider the following 485-residue polypeptide: CUGBP Elav-like family member 5 (485 aa).

A compositionally biased stretch (basic and acidic residues) spans 1–11 (MARLTESEARR). Positions 1 to 40 (MARLTESEARRQQQQLLQPRPSPVGSSGPEPPGGQPDGMK) are disordered. The segment covering 12-28 (QQQQLLQPRPSPVGSSG) has biased composition (low complexity). RRM domains lie at 45–126 (IKLF…PADS), 134–214 (RKLF…FADT), and 400–478 (CNLF…LKRP).

Belongs to the CELF/BRUNOL family. Expressed in brain.

It is found in the nucleus. It localises to the cytoplasm. RNA-binding protein implicated in the regulation of pre-mRNA alternative splicing. Mediates exon inclusion and/or exclusion in pre-mRNA that are subject to tissue-specific and developmentally regulated alternative splicing. Specifically activates exon 5 inclusion of cardiac isoforms of TNNT2 during heart remodeling at the juvenile to adult transition. Binds to muscle-specific splicing enhancer (MSE) intronic sites flanking the alternative exon 5 of TNNT2 pre-mRNA. This is CUGBP Elav-like family member 5 (CELF5) from Homo sapiens (Human).